Reading from the N-terminus, the 239-residue chain is MAYQSLRLEYLQIPPVSRAYTTACVLTTAAVQLELITPFQLYFNPELIFKHFQIWRLITNFLFFGPVGFNFLFNMIFLYRYCRMLEEGSFRGRTADFVFMFLFGGFLMTLFGLFVSLVFLGQAFTIMLVYVWSRRNPYVRMNFFGLLNFQAPFLPWVLMGFSLLLGNSIIVDLLGIAVGHIYFFLEDVFPNQPGGIRILKTPSILKAIFDTPDEDPNYNPLPEERPGGFAWGEGQRLGG.

Residues 1 to 56 (MAYQSLRLEYLQIPPVSRAYTTACVLTTAAVQLELITPFQLYFNPELIFKHFQIWR) are Cytoplasmic-facing. Residues 57–77 (LITNFLFFGPVGFNFLFNMIF) form a helical membrane-spanning segment. At 78-98 (LYRYCRMLEEGSFRGRTADFV) the chain is on the lumenal side. The helical transmembrane segment at 99–119 (FMFLFGGFLMTLFGLFVSLVF) threads the bilayer. The Cytoplasmic segment spans residues 120 to 150 (LGQAFTIMLVYVWSRRNPYVRMNFFGLLNFQ). The chain crosses the membrane as a helical span at residues 151–171 (APFLPWVLMGFSLLLGNSIIV). Aspartate 172 is a topological domain (lumenal). The chain crosses the membrane as a helical span at residues 173–193 (LLGIAVGHIYFFLEDVFPNQP). Over 194 to 239 (GGIRILKTPSILKAIFDTPDEDPNYNPLPEERPGGFAWGEGQRLGG) the chain is Cytoplasmic. Residues 215–239 (DPNYNPLPEERPGGFAWGEGQRLGG) form a disordered region. Positions 229 to 239 (FAWGEGQRLGG) are enriched in gly residues.

This sequence belongs to the derlin family. As to quaternary structure, forms homo- and heterooligomers with DERL3 and, to a lesser extent, with DERL1. Interacts with the SEL1L/SYVN1 and VCP/SELENOS protein complexes. Mediates association between VCP and EDEM1, as well as that between VCP and the misfolded glycoproteins. Interacts with OS9. Interacts with SELENOK and SELENOS. Interacts with the signal recognition particle/SRP and the SRP receptor; in the process of endoplasmic reticulum stress-induced pre-emptive quality control. Interacts with CCDC47.

It is found in the endoplasmic reticulum membrane. Functional component of endoplasmic reticulum-associated degradation (ERAD) for misfolded lumenal glycoproteins, but not that of misfolded nonglycoproteins. May act by forming a channel that allows the retrotranslocation of misfolded glycoproteins into the cytosol where they are ubiquitinated and degraded by the proteasome. May mediate the interaction between VCP and misfolded glycoproteins. May also be involved in endoplasmic reticulum stress-induced pre-emptive quality control, a mechanism that selectively attenuates the translocation of newly synthesized proteins into the endoplasmic reticulum and reroutes them to the cytosol for proteasomal degradation. The chain is Derlin-2 from Pongo abelii (Sumatran orangutan).